We begin with the raw amino-acid sequence, 235 residues long: 2-C-methyl-D-erythritol 4-phosphate cytidylyltransferase (235 aa).

This sequence belongs to the IspD/TarI cytidylyltransferase family. IspD subfamily. In terms of assembly, homodimer.

It carries out the reaction 2-C-methyl-D-erythritol 4-phosphate + CTP + H(+) = 4-CDP-2-C-methyl-D-erythritol + diphosphate. It functions in the pathway isoprenoid biosynthesis; isopentenyl diphosphate biosynthesis via DXP pathway; isopentenyl diphosphate from 1-deoxy-D-xylulose 5-phosphate: step 2/6. Functionally, catalyzes the formation of 4-diphosphocytidyl-2-C-methyl-D-erythritol from CTP and 2-C-methyl-D-erythritol 4-phosphate (MEP). In Serratia proteamaculans (strain 568), this protein is 2-C-methyl-D-erythritol 4-phosphate cytidylyltransferase.